A 467-amino-acid chain; its full sequence is ATP synthase subunit beta (467 aa).

Position 150–157 (150–157) interacts with ATP; sequence GGAGVGKT.

It belongs to the ATPase alpha/beta chains family. F-type ATPases have 2 components, CF(1) - the catalytic core - and CF(0) - the membrane proton channel. CF(1) has five subunits: alpha(3), beta(3), gamma(1), delta(1), epsilon(1). CF(0) has three main subunits: a(1), b(2) and c(9-12). The alpha and beta chains form an alternating ring which encloses part of the gamma chain. CF(1) is attached to CF(0) by a central stalk formed by the gamma and epsilon chains, while a peripheral stalk is formed by the delta and b chains.

It is found in the cell inner membrane. It carries out the reaction ATP + H2O + 4 H(+)(in) = ADP + phosphate + 5 H(+)(out). Produces ATP from ADP in the presence of a proton gradient across the membrane. The catalytic sites are hosted primarily by the beta subunits. The sequence is that of ATP synthase subunit beta from Aliivibrio fischeri (strain ATCC 700601 / ES114) (Vibrio fischeri).